A 205-amino-acid chain; its full sequence is Golgi apparatus membrane protein TVP23 homolog B (205 aa).

Met-1 is subject to N-acetylmethionine. The interval Met-1 to Glu-21 is disordered. 4 consecutive transmembrane segments (helical) span residues Pro-34 to Leu-53, Cys-54 to Leu-72, Ile-126 to Leu-146, and Lys-152 to Ile-172.

It belongs to the TVP23 family.

Its subcellular location is the membrane. This is Golgi apparatus membrane protein TVP23 homolog B (TVP23B) from Homo sapiens (Human).